A 275-amino-acid polypeptide reads, in one-letter code: Large ribosomal subunit protein uL2c (275 aa).

2 disordered regions span residues 1-28 (MGIR…TKSK) and 227-251 (PCDH…TPWG). The segment covering 10-22 (TPGTRNRSSSDFS) has biased composition (polar residues).

Belongs to the universal ribosomal protein uL2 family. Part of the 50S ribosomal subunit.

It localises to the plastid. The protein resides in the chloroplast. This is Large ribosomal subunit protein uL2c (rpl2) from Rhodomonas salina (Cryptomonas salina).